A 203-amino-acid chain; its full sequence is Regulator of ribosome biosynthesis (203 aa).

The disordered stretch occupies residues 184–203 (RKRLVKKNEKQQRRNMKNAL).

It belongs to the RRS1 family. Component of a hexameric 5S RNP precursor complex, composed of 5S RNA, RRS1, RPF2, RPL5, RPL11A/RPL11B and SYO1; this complex acts as a precursor for ribosome assembly.

It localises to the nucleus. Functionally, required for ribosome biogenesis. This is Regulator of ribosome biosynthesis (RRS1) from Saccharomyces cerevisiae (strain ATCC 204508 / S288c) (Baker's yeast).